Consider the following 166-residue polypeptide: Putative pre-16S rRNA nuclease (166 aa).

A disordered region spans residues 1 to 24; the sequence is MPDTAAPTPDRPGPDDPGRGRRLG.

The protein belongs to the YqgF nuclease family.

Its subcellular location is the cytoplasm. Functionally, could be a nuclease involved in processing of the 5'-end of pre-16S rRNA. The polypeptide is Putative pre-16S rRNA nuclease (Mycobacteroides abscessus (strain ATCC 19977 / DSM 44196 / CCUG 20993 / CIP 104536 / JCM 13569 / NCTC 13031 / TMC 1543 / L948) (Mycobacterium abscessus)).